Here is a 500-residue protein sequence, read N- to C-terminus: Hexokinase-3 (500 aa).

A helical transmembrane segment spans residues 4-24 (VGLGVAVGCAAVTCAIAAALV). The Hexokinase domain occupies 35–487 (RRAVALLREF…SGVGAALLAA (453 aa)). A hexokinase small subdomain region spans residues 90 to 222 (SGSEEGVYYS…GLNVRVTALV (133 aa)). Residues glycine 104, threonine 105, and asparagine 106 each contribute to the ADP site. D-glucose-binding residues include threonine 188, lysine 189, asparagine 223, and aspartate 224. Positions 223 to 476 (NDTVGTLALG…RNVTLRVTED (254 aa)) are hexokinase large subdomain. Serine 247 is a binding site for ADP. D-glucose-binding residues include asparagine 250, glutamate 278, and glutamate 309. Position 441 (glycine 441) interacts with ADP.

The protein belongs to the hexokinase family. Expressed in roots, leaves, flowers, immature seeds and seed coat. Expressed in young shoots, tiller buds, endosperm seven days after fertilization, and interconnecting tissues such as pulvini and nodes.

The protein localises to the mitochondrion outer membrane. It carries out the reaction a D-hexose + ATP = a D-hexose 6-phosphate + ADP + H(+). The catalysed reaction is D-fructose + ATP = D-fructose 6-phosphate + ADP + H(+). It catalyses the reaction D-glucose + ATP = D-glucose 6-phosphate + ADP + H(+). Its pathway is carbohydrate metabolism; hexose metabolism. It functions in the pathway carbohydrate degradation; glycolysis; D-glyceraldehyde 3-phosphate and glycerone phosphate from D-glucose: step 1/4. In terms of biological role, fructose and glucose phosphorylating enzyme. Involved in the regulation of cell expansion in spikelet hulls, grain size, and gibberellin biosynthesis and homeostasis. The sequence is that of Hexokinase-3 from Oryza sativa subsp. japonica (Rice).